The chain runs to 117 residues: MARVKTGVVRRRRHKKVLKLARGFYSGRRKHFRKAKEQLERSLVYAYRDRRRKKRDFRRLWIVRINAACRLNDLSYSRFINGLKKAGIELDRKILADLAMNDSAAFAKIAEAAKKAL.

This sequence belongs to the bacterial ribosomal protein bL20 family.

Functionally, binds directly to 23S ribosomal RNA and is necessary for the in vitro assembly process of the 50S ribosomal subunit. It is not involved in the protein synthesizing functions of that subunit. The protein is Large ribosomal subunit protein bL20 of Campylobacter jejuni subsp. jejuni serotype O:6 (strain 81116 / NCTC 11828).